The primary structure comprises 428 residues: Adenylosuccinate synthetase (428 aa).

GTP-binding positions include 12–18 (GDEGKGK) and 40–42 (GHT). Catalysis depends on Asp-13, which acts as the Proton acceptor. Mg(2+) contacts are provided by Asp-13 and Gly-40. IMP-binding positions include 13–16 (DEGK), 38–41 (NAGH), Thr-129, Arg-143, Gln-224, Thr-239, and Arg-303. His-41 functions as the Proton donor in the catalytic mechanism. 299-305 (VTTGRIR) contributes to the substrate binding site. GTP contacts are provided by residues Arg-305, 331-333 (KVD), and 410-412 (AYG).

Belongs to the adenylosuccinate synthetase family. As to quaternary structure, homodimer. Mg(2+) is required as a cofactor.

It is found in the cytoplasm. The catalysed reaction is IMP + L-aspartate + GTP = N(6)-(1,2-dicarboxyethyl)-AMP + GDP + phosphate + 2 H(+). It participates in purine metabolism; AMP biosynthesis via de novo pathway; AMP from IMP: step 1/2. Its function is as follows. Plays an important role in the de novo pathway of purine nucleotide biosynthesis. Catalyzes the first committed step in the biosynthesis of AMP from IMP. The polypeptide is Adenylosuccinate synthetase (Francisella tularensis subsp. novicida (strain U112)).